The primary structure comprises 191 residues: Elongation factor P (191 aa).

The protein belongs to the elongation factor P family.

Its subcellular location is the cytoplasm. It functions in the pathway protein biosynthesis; polypeptide chain elongation. In terms of biological role, involved in peptide bond synthesis. Stimulates efficient translation and peptide-bond synthesis on native or reconstituted 70S ribosomes in vitro. Probably functions indirectly by altering the affinity of the ribosome for aminoacyl-tRNA, thus increasing their reactivity as acceptors for peptidyl transferase. This is Elongation factor P from Janthinobacterium sp. (strain Marseille) (Minibacterium massiliensis).